Reading from the N-terminus, the 194-residue chain is MYKNFNEGMIEVITGPMFSGKSEELLKRIRTLEYAKLKPLVIKPEFDTRFSENEIVSRAGVKHKTHILKNINDVYFLLQEDKYKAVVIDEAHWFNEELVKVADDLANKGYLVIVAGLDQNYLREPFGPIPNLLAIAERVTKLQAICVKCQHAASTSFRKVAASEINLLGDFQEYEARCRKCHNAGQKEKLQKKV.

ATP contacts are provided by residues 15–22 (GPMFSGKS) and 89–92 (DEAH). Glu90 (proton acceptor) is an active-site residue. Zn(2+)-binding residues include Cys146, Cys149, Cys178, and Cys181.

This sequence belongs to the thymidine kinase family. As to quaternary structure, homotetramer.

The protein resides in the cytoplasm. The enzyme catalyses thymidine + ATP = dTMP + ADP + H(+). The protein is Thymidine kinase of Metamycoplasma arthritidis (strain 158L3-1) (Mycoplasma arthritidis).